The primary structure comprises 133 residues: Interleukin-4 (133 aa).

Residues 1–24 (MGLTSQLIPMLVCLLACTSNFVHG) form the signal peptide. 3 disulfide bridges follow: Cys-27–Cys-133, Cys-48–Cys-85, and Cys-70–Cys-105. N-linked (GlcNAc...) asparagine glycans are attached at residues Asn-62, Asn-96, and Asn-102.

The protein belongs to the IL-4/IL-13 family.

The protein localises to the secreted. Functionally, participates in at least several B-cell activation processes as well as of other cell types. It is a costimulator of DNA-synthesis. It induces the expression of class II MHC molecules on resting B-cells. It enhances both secretion and cell surface expression of IgE and IgG1. It also regulates the expression of the low affinity Fc receptor for IgE (CD23) on both lymphocytes and monocytes. Positively regulates IL31RA expression in macrophages. Stimulates autophagy in dendritic cells by interfering with mTORC1 signaling and through the induction of RUFY4. This is Interleukin-4 (IL4) from Tursiops truncatus (Atlantic bottle-nosed dolphin).